We begin with the raw amino-acid sequence, 331 residues long: Cytosolic arginine sensor for mTORC1 subunit 1 (331 aa).

The residue at position 14 (serine 14) is a Phosphoserine. ACT domains lie at 72–137 (AEAT…HTLA) and 259–320 (GELW…DILQ). L-arginine-binding positions include 110–111 (SV), glycine 273, 279–280 (IV), and 299–303 (TFNFD).

It belongs to the GATS family. Forms homodimers and heterodimers with CASTOR2. Interacts with the GATOR2 complex which is composed of MIOS, SEC13, SEH1L, WDR24 and WDR59; the interaction is negatively regulated by arginine. Interacts with TM4SF5; the interaction is positively regulated by leucine and is negatively regulated by arginine. Phosphorylation at Ser-14 by AKT1, promoting the interaction between CASTOR1 and RNF167. Post-translationally, ubiquitinated by RNF167 via 'Lys-29'-polyubiquitination, leading to its degradation, releasing the GATOR2 complex. Ubiquitination by RNF167 is promoted by phosphorylation at Ser-14 by AKT1.

It localises to the cytoplasm. The protein resides in the cytosol. Its function is as follows. Functions as an intracellular arginine sensor within the amino acid-sensing branch of the TORC1 signaling pathway. As a homodimer or a heterodimer with CASTOR2, binds and inhibits the GATOR subcomplex GATOR2 and thereby mTORC1. Binding of arginine to CASTOR1 allosterically disrupts the interaction of CASTOR1-containing dimers with GATOR2 which can in turn activate mTORC1 and the TORC1 signaling pathway. This chain is Cytosolic arginine sensor for mTORC1 subunit 1, found in Mus musculus (Mouse).